The sequence spans 1037 residues: Multidrug resistance protein MdtF (1037 aa).

At 1 to 9 (MANYFIDRP) the chain is on the cytoplasmic side. The helical transmembrane segment at 10 to 30 (VFAWVLAIIMMLAGGLAIMNL) threads the bilayer. The Periplasmic portion of the chain corresponds to 31-338 (PVAQYPQIAP…TTPFIEISIQ (308 aa)). A helical transmembrane segment spans residues 339–359 (EVFKTLVEAIILVFLVMYLFL). Topologically, residues 360–369 (QNFRATIIPT) are cytoplasmic. The helical transmembrane segment at 370–390 (IAVPVVILGTFAILSAVGFTI) threads the bilayer. Residues 391-392 (NT) are Periplasmic-facing. A helical transmembrane segment spans residues 393–413 (LTMFGMVLAIGLLVDDAIVVV). The Cytoplasmic segment spans residues 414-441 (ENVERVIAEDKLPPKEATHKSMGQIQRA). A helical membrane pass occupies residues 442–462 (LVGIAVVLSAVFMPMAFMSGA). Residues 463-471 (TGEIYRQFS) are Periplasmic-facing. Residues 472 to 492 (ITLISSMLLSVFVAMSLTPAL) traverse the membrane as a helical segment. At 493–534 (CATILKAAPEGGHKPNALFARFNTLFEKSTQHYTDSTRSLLR) the chain is on the cytoplasmic side. Residues 535 to 555 (CTGRYMVIYLLICAGMAVLFL) form a helical membrane-spanning segment. Residues 556–870 (RTPTSFLPEE…SYQEALSSNQ (315 aa)) are Periplasmic-facing. The helical transmembrane segment at 871 to 891 (APALYAISLVVVFLALAALYE) threads the bilayer. A topological domain (cytoplasmic) is located at residue Ser-892. Residues 893–913 (WSIPFSVMLVVPLGVVGALLA) traverse the membrane as a helical segment. Over 914-927 (TDLRGLSNDVYFQV) the chain is Periplasmic. The helical transmembrane segment at 928 to 948 (GLLTTIGLSAKNAILIVEFAV) threads the bilayer. The Cytoplasmic portion of the chain corresponds to 949–972 (EMMQKEGKTPIEAIIEAARMRLRP). Residues 973–993 (ILMTSLAFILGVLPLVISHGA) form a helical membrane-spanning segment. Topologically, residues 994–1006 (GSGAQNAVGTGVM) are periplasmic. The chain crosses the membrane as a helical span at residues 1007–1027 (GGMFAATVLAIYFVPVFFVVV). The Cytoplasmic portion of the chain corresponds to 1028–1037 (EHLFARFKKA).

Belongs to the resistance-nodulation-cell division (RND) (TC 2.A.6) family. In terms of assembly, homotrimer. Part of the tripartite efflux system MdtEF-TolC, which is composed of an inner membrane transporter, MdtF, a membrane fusion protein, MdtE, and an outer membrane component, TolC. The complex forms a large protein conduit and can translocate molecules across both the inner and outer membranes.

It is found in the cell inner membrane. In terms of biological role, part of the tripartite efflux system MdtEF-TolC, which confers resistance to various compounds. The polypeptide is Multidrug resistance protein MdtF (mdtF) (Escherichia coli O157:H7).